A 546-amino-acid polypeptide reads, in one-letter code: CTP synthase (546 aa).

The segment at 1–269 (MNSNTKIIFV…DAKLVELLNL (269 aa)) is amidoligase domain. Ser16 is a binding site for CTP. Ser16 is a binding site for UTP. Residues 17–22 (SLGKGV) and Asp74 each bind ATP. Asp74 and Glu143 together coordinate Mg(2+). CTP-binding positions include 150 to 152 (DIE), 190 to 195 (KTKPTQ), and Lys226. UTP is bound by residues 190–195 (KTKPTQ) and Lys226. A Glutamine amidotransferase type-1 domain is found at 294-546 (IIAMVGKYVS…IQAAIENSNN (253 aa)). Gly356 serves as a coordination point for L-glutamine. Cys383 acts as the Nucleophile; for glutamine hydrolysis in catalysis. Residues 384-387 (LGMQ), Glu407, and Arg474 contribute to the L-glutamine site. Catalysis depends on residues His519 and Glu521.

It belongs to the CTP synthase family. As to quaternary structure, homotetramer.

The catalysed reaction is UTP + L-glutamine + ATP + H2O = CTP + L-glutamate + ADP + phosphate + 2 H(+). The enzyme catalyses L-glutamine + H2O = L-glutamate + NH4(+). It catalyses the reaction UTP + NH4(+) + ATP = CTP + ADP + phosphate + 2 H(+). Its pathway is pyrimidine metabolism; CTP biosynthesis via de novo pathway; CTP from UDP: step 2/2. Allosterically activated by GTP, when glutamine is the substrate; GTP has no effect on the reaction when ammonia is the substrate. The allosteric effector GTP functions by stabilizing the protein conformation that binds the tetrahedral intermediate(s) formed during glutamine hydrolysis. Inhibited by the product CTP, via allosteric rather than competitive inhibition. Functionally, catalyzes the ATP-dependent amination of UTP to CTP with either L-glutamine or ammonia as the source of nitrogen. Regulates intracellular CTP levels through interactions with the four ribonucleotide triphosphates. In Francisella tularensis subsp. holarctica (strain FTNF002-00 / FTA), this protein is CTP synthase.